Here is a 171-residue protein sequence, read N- to C-terminus: Putative MucR family transcriptional regulatory protein y4pD (171 aa).

It belongs to the ros/MucR family.

The chain is Putative MucR family transcriptional regulatory protein y4pD from Sinorhizobium fredii (strain NBRC 101917 / NGR234).